A 207-amino-acid polypeptide reads, in one-letter code: Outer-membrane lipoprotein LolB (207 aa).

A signal peptide spans 1-21 (MPLPDFRLIRLLPLAALVLTA). Cys22 is lipidated: N-palmitoyl cysteine. Cys22 carries the S-diacylglycerol cysteine lipid modification.

Belongs to the LolB family. As to quaternary structure, monomer.

It is found in the cell outer membrane. Functionally, plays a critical role in the incorporation of lipoproteins in the outer membrane after they are released by the LolA protein. The protein is Outer-membrane lipoprotein LolB of Shigella boydii serotype 18 (strain CDC 3083-94 / BS512).